The following is a 252-amino-acid chain: Adenosylcobinamide-GDP ribazoletransferase (252 aa).

The next 6 membrane-spanning stretches (helical) occupy residues 29-49 (LYWF…LGYV), 50-70 (GSLS…GIVL), 104-124 (VGSF…VAVV), 129-149 (FGLF…QVLL), 166-186 (FVAG…LALL), and 194-214 (FPTM…VGMV).

Belongs to the CobS family. Mg(2+) serves as cofactor.

It is found in the cell inner membrane. It carries out the reaction alpha-ribazole + adenosylcob(III)inamide-GDP = adenosylcob(III)alamin + GMP + H(+). The enzyme catalyses alpha-ribazole 5'-phosphate + adenosylcob(III)inamide-GDP = adenosylcob(III)alamin 5'-phosphate + GMP + H(+). It participates in cofactor biosynthesis; adenosylcobalamin biosynthesis; adenosylcobalamin from cob(II)yrinate a,c-diamide: step 7/7. Functionally, joins adenosylcobinamide-GDP and alpha-ribazole to generate adenosylcobalamin (Ado-cobalamin). Also synthesizes adenosylcobalamin 5'-phosphate from adenosylcobinamide-GDP and alpha-ribazole 5'-phosphate. The protein is Adenosylcobinamide-GDP ribazoletransferase of Chlorobium chlorochromatii (strain CaD3).